Consider the following 374-residue polypeptide: Polyprotein p42 (374 aa).

At Met-1–Arg-238 the chain is on the cytoplasmic side. A helical; Signal-anchor for type II membrane protein transmembrane segment spans residues Met-239–Ala-259. Residues Cys-260–Leu-288 are Extracellular-facing. Asn-270 carries N-linked (GlcNAc...) asparagine; by host glycosylation. Residues Thr-289–Ile-309 form a helical membrane-spanning segment. Residues Glu-310–Ile-374 lie on the Cytoplasmic side of the membrane. Cys-324 carries the S-palmitoyl cysteine; by host lipid modification. Phosphoserine; by host occurs at positions 337 and 362.

It belongs to the influenza C protein M1 family. Homodimer; disulfide-linked. Homotetramer; disulfide-linked. In terms of processing, palmitoylated. N-glycosylated. Post-translationally, ser-337 is the major site of phosphorylation, Ser-362 being a minor one.

The protein localises to the host endoplasmic reticulum membrane. The protein resides in the virion membrane. It is found in the host cell membrane. Functionally, ion channel, which might have a role in genome packaging and uncoating processes. This is Polyprotein p42 (M) from Influenza C virus (strain C/Ann Arbor/1/1950).